The following is a 458-amino-acid chain: UDP-glycosyltransferase 76G1 (458 aa).

Catalysis depends on His-25, which acts as the Proton acceptor. His-25 serves as a coordination point for rebaudioside A. His-25 lines the rubusoside pocket. Asn-27 serves as a coordination point for UDP. Asp-124 functions as the Charge relay in the catalytic mechanism. Rebaudioside A-binding positions include 146–147 (TS) and His-155. UDP-binding positions include Ser-283, 338 to 339 (WV), and 356 to 364 (HSGWNSTLE). Residues Trp-359 and 380-381 (DQ) contribute to the rebaudioside A site.

The protein belongs to the UDP-glycosyltransferase family. As to quaternary structure, monomer.

It carries out the reaction steviolbioside + UDP-alpha-D-glucose = rebaudioside B + UDP + H(+). It catalyses the reaction stevioside + UDP-alpha-D-glucose = rebaudioside A + UDP + H(+). The enzyme catalyses rebaudioside E + UDP-alpha-D-glucose = rebaudioside D + UDP + H(+). The catalysed reaction is rebaudioside D + UDP-alpha-D-glucose = rebaudioside M + UDP + H(+). Functionally, involved in the biosynthesis of steviol glycosides in leaves. Converts the di-glycoside steviolbioside to the tri-glycoside rebaudioside B. Converts the tri-glycoside stevioside to the tetra-glycoside rebaudioside A. Converts the tetra-glycoside rebaudioside E to the penta-glycoside rebaudioside D. Converts the penta-glycoside rebaudioside D to the hexa-glycoside rebaudioside M. Can glucosylate rubusoside and rebaudioside A in vitro. The chain is UDP-glycosyltransferase 76G1 from Stevia rebaudiana (Stevia).